Consider the following 204-residue polypeptide: Elongation factor Ts (204 aa).

The interval 80–83 (TDFV) is involved in Mg(2+) ion dislocation from EF-Tu.

It belongs to the EF-Ts family.

Its subcellular location is the cytoplasm. In terms of biological role, associates with the EF-Tu.GDP complex and induces the exchange of GDP to GTP. It remains bound to the aminoacyl-tRNA.EF-Tu.GTP complex up to the GTP hydrolysis stage on the ribosome. In Caldicellulosiruptor saccharolyticus (strain ATCC 43494 / DSM 8903 / Tp8T 6331), this protein is Elongation factor Ts.